The primary structure comprises 171 residues: Cadmium-induced protein AS8 (171 aa).

The sequence is that of Cadmium-induced protein AS8 from Arabidopsis thaliana (Mouse-ear cress).